A 299-amino-acid chain; its full sequence is ATP phosphoribosyltransferase (299 aa).

It belongs to the ATP phosphoribosyltransferase family. Long subfamily. Mg(2+) serves as cofactor.

The protein localises to the cytoplasm. It carries out the reaction 1-(5-phospho-beta-D-ribosyl)-ATP + diphosphate = 5-phospho-alpha-D-ribose 1-diphosphate + ATP. The protein operates within amino-acid biosynthesis; L-histidine biosynthesis; L-histidine from 5-phospho-alpha-D-ribose 1-diphosphate: step 1/9. Feedback inhibited by histidine. Its function is as follows. Catalyzes the condensation of ATP and 5-phosphoribose 1-diphosphate to form N'-(5'-phosphoribosyl)-ATP (PR-ATP). Has a crucial role in the pathway because the rate of histidine biosynthesis seems to be controlled primarily by regulation of HisG enzymatic activity. This Shewanella denitrificans (strain OS217 / ATCC BAA-1090 / DSM 15013) protein is ATP phosphoribosyltransferase.